Consider the following 502-residue polypeptide: Cardiolipin synthase (502 aa).

A run of 3 helical transmembrane segments spans residues 7–27, 29–49, and 59–79; these read VAILIVIVGVLLTLTHDYWGG, LLGIFSVLISCSVVFIAFVIS, and IAWLAVLGSFPFLGFLFYLLF. 2 PLD phosphodiesterase domains span residues 237–264 and 415–442; these read INFRNHRKIIVIDGGVGFVGGLNIGDEY and EKGFLHSKVIVVDGELASIGTANMDMRS. Catalysis depends on residues histidine 242, lysine 244, aspartate 249, histidine 420, lysine 422, and aspartate 427.

It belongs to the phospholipase D family. Cardiolipin synthase subfamily.

It localises to the cell membrane. It carries out the reaction 2 a 1,2-diacyl-sn-glycero-3-phospho-(1'-sn-glycerol) = a cardiolipin + glycerol. Its function is as follows. Catalyzes the reversible phosphatidyl group transfer from one phosphatidylglycerol molecule to another to form cardiolipin (CL) (diphosphatidylglycerol) and glycerol. This Geobacillus thermodenitrificans (strain NG80-2) protein is Cardiolipin synthase (cls).